The sequence spans 151 residues: UPF0208 membrane protein YfbV (151 aa).

Residues 1-45 (MSTPDNRSVNFFSLFCRGQHYSKTWPLEKRLAPVFVENRVIKMTR) are Cytoplasmic-facing. Residues 46–65 (YAIRFMPPIAVFTLCWQIAL) traverse the membrane as a helical segment. The Periplasmic segment spans residues 66–68 (GGQ). The chain crosses the membrane as a helical span at residues 69 to 91 (LGPAVATALFALSLPMQGLWWLG). At 92-151 (KRSVTPLPPAILNWFYEVRGKLQESGQVLAPVEGKPDYQALADTLKRAFKQLDKTFLDDL) the chain is on the cytoplasmic side.

The protein belongs to the UPF0208 family.

Its subcellular location is the cell inner membrane. This is UPF0208 membrane protein YfbV (yfbV) from Escherichia coli O6:H1 (strain CFT073 / ATCC 700928 / UPEC).